Here is a 545-residue protein sequence, read N- to C-terminus: Glucose-6-phosphate isomerase (545 aa).

The Proton donor role is filled by Glu345. Residues His376 and Lys514 contribute to the active site.

This sequence belongs to the GPI family.

The protein resides in the cytoplasm. It catalyses the reaction alpha-D-glucose 6-phosphate = beta-D-fructose 6-phosphate. The protein operates within carbohydrate biosynthesis; gluconeogenesis. Its pathway is carbohydrate degradation; glycolysis; D-glyceraldehyde 3-phosphate and glycerone phosphate from D-glucose: step 2/4. Catalyzes the reversible isomerization of glucose-6-phosphate to fructose-6-phosphate. The protein is Glucose-6-phosphate isomerase of Leptothrix cholodnii (strain ATCC 51168 / LMG 8142 / SP-6) (Leptothrix discophora (strain SP-6)).